Consider the following 226-residue polypeptide: 2,3-bisphosphoglycerate-dependent phosphoglycerate mutase (226 aa).

Residues 8–15 (RHGQSVWN), 21–22 (TG), R58, 109–112 (ERMY), K120, 136–137 (RR), and 180–181 (GN) each bind substrate. H9 functions as the Tele-phosphohistidine intermediate in the catalytic mechanism. Catalysis depends on E109, which acts as the Proton donor/acceptor.

This sequence belongs to the phosphoglycerate mutase family. BPG-dependent PGAM subfamily.

It carries out the reaction (2R)-2-phosphoglycerate = (2R)-3-phosphoglycerate. It functions in the pathway carbohydrate degradation; glycolysis; pyruvate from D-glyceraldehyde 3-phosphate: step 3/5. Functionally, catalyzes the interconversion of 2-phosphoglycerate and 3-phosphoglycerate. The protein is 2,3-bisphosphoglycerate-dependent phosphoglycerate mutase of Chlamydia trachomatis serovar A (strain ATCC VR-571B / DSM 19440 / HAR-13).